Reading from the N-terminus, the 90-residue chain is Small ribosomal subunit protein bS16 (90 aa).

It belongs to the bacterial ribosomal protein bS16 family.

The sequence is that of Small ribosomal subunit protein bS16 from Shouchella clausii (strain KSM-K16) (Alkalihalobacillus clausii).